The chain runs to 235 residues: Ubiquinone biosynthesis O-methyltransferase (235 aa).

Arg-39, Gly-59, Asp-80, and Met-124 together coordinate S-adenosyl-L-methionine.

Belongs to the methyltransferase superfamily. UbiG/COQ3 family.

The enzyme catalyses a 3-demethylubiquinol + S-adenosyl-L-methionine = a ubiquinol + S-adenosyl-L-homocysteine + H(+). It catalyses the reaction a 3-(all-trans-polyprenyl)benzene-1,2-diol + S-adenosyl-L-methionine = a 2-methoxy-6-(all-trans-polyprenyl)phenol + S-adenosyl-L-homocysteine + H(+). Its pathway is cofactor biosynthesis; ubiquinone biosynthesis. Functionally, O-methyltransferase that catalyzes the 2 O-methylation steps in the ubiquinone biosynthetic pathway. The protein is Ubiquinone biosynthesis O-methyltransferase of Vibrio parahaemolyticus serotype O3:K6 (strain RIMD 2210633).